A 387-amino-acid polypeptide reads, in one-letter code: Alanine racemase (387 aa).

Lysine 38 functions as the Proton acceptor; specific for D-alanine in the catalytic mechanism. Lysine 38 carries the N6-(pyridoxal phosphate)lysine modification. Arginine 136 provides a ligand contact to substrate. Tyrosine 267 serves as the catalytic Proton acceptor; specific for L-alanine. Methionine 316 provides a ligand contact to substrate.

This sequence belongs to the alanine racemase family. Requires pyridoxal 5'-phosphate as cofactor.

The enzyme catalyses L-alanine = D-alanine. It functions in the pathway amino-acid biosynthesis; D-alanine biosynthesis; D-alanine from L-alanine: step 1/1. Its function is as follows. Catalyzes the interconversion of L-alanine and D-alanine. May also act on other amino acids. The polypeptide is Alanine racemase (alr) (Clostridium tetani (strain Massachusetts / E88)).